Consider the following 268-residue polypeptide: Undecaprenyl-diphosphatase (268 aa).

8 helical membrane-spanning segments follow: residues 8 to 28 (VILG…TGHL), 41 to 61 (AFWD…IVGL), 83 to 103 (FVIG…VAGK), 108 to 128 (VLFN…ILLW), 144 to 164 (FPLL…IPGV), 184 to 204 (AAEF…AYDF), 218 to 238 (IVAI…KTFL), and 246 to 266 (FVVF…ALAL).

The protein belongs to the UppP family.

Its subcellular location is the cell inner membrane. It carries out the reaction di-trans,octa-cis-undecaprenyl diphosphate + H2O = di-trans,octa-cis-undecaprenyl phosphate + phosphate + H(+). Functionally, catalyzes the dephosphorylation of undecaprenyl diphosphate (UPP). Confers resistance to bacitracin. This chain is Undecaprenyl-diphosphatase, found in Bradyrhizobium diazoefficiens (strain JCM 10833 / BCRC 13528 / IAM 13628 / NBRC 14792 / USDA 110).